Consider the following 733-residue polypeptide: Ribosomal protein S6 kinase alpha-2 (733 aa).

The 260-residue stretch at 59–318 folds into the Protein kinase 1 domain; that stretch reads FELLKVLGQG…VEEIKRHPFF (260 aa). ATP-binding positions include 65-73 and K91; that span reads LGQGSYGKV. D184 functions as the Proton acceptor in the catalytic mechanism. At S218 the chain carries Phosphoserine; by PDPK1. The AGC-kinase C-terminal domain occupies 319-388; sequence VTIDWNTLYR…VASSLIQEPS (70 aa). Residue S377 is modified to Phosphoserine. A Protein kinase 2 domain is found at 415–672; it reads YEIKEDIGVG…AMQVLKHPWV (258 aa). Residues 421 to 429 and K444 contribute to the ATP site; that span reads IGVGSYSVC. Catalysis depends on D532, which acts as the Proton acceptor.

This sequence belongs to the protein kinase superfamily. AGC Ser/Thr protein kinase family. S6 kinase subfamily. As to quaternary structure, forms a complex with either MAPK1/ERK2 or MAPK3/ERK1 in quiescent cells. Transiently dissociates following mitogenic stimulation. Interacts with FBXO5; cooperate to induce the metaphase arrest of early blastomeres; increases and stabilizes interaction of FBXO5 with CDC20. It depends on Mg(2+) as a cofactor. In terms of processing, activated by phosphorylation at Ser-218 by PDPK1. Autophosphorylated on Ser-377, as part of the activation process. May be phosphorylated at Thr-356 and Ser-360 by MAPK1/ERK2 and MAPK3/ERK1. Post-translationally, N-terminal myristoylation results in an activated kinase in the absence of added growth factors. Widely expressed with higher expression in lung, skeletal muscle, brain, uterus, ovary, thyroid and prostate.

It is found in the nucleus. The protein resides in the cytoplasm. The enzyme catalyses L-seryl-[protein] + ATP = O-phospho-L-seryl-[protein] + ADP + H(+). The catalysed reaction is L-threonyl-[protein] + ATP = O-phospho-L-threonyl-[protein] + ADP + H(+). Upon extracellular signal or mitogen stimulation, phosphorylated at Thr-570 in the C-terminal kinase domain (CTKD) by MAPK1/ERK2 and MAPK3/ERK1. The activated CTKD then autophosphorylates Ser-377, allowing binding of PDPK1, which in turn phosphorylates Ser-218 in the N-terminal kinase domain (NTDK) leading to the full activation of the protein and subsequent phosphorylation of the substrates by the NTKD. Functionally, serine/threonine-protein kinase that acts downstream of ERK (MAPK1/ERK2 and MAPK3/ERK1) signaling and mediates mitogenic and stress-induced activation of transcription factors, regulates translation, and mediates cellular proliferation, survival, and differentiation. May function as tumor suppressor in epithelial ovarian cancer cells. This chain is Ribosomal protein S6 kinase alpha-2 (RPS6KA2), found in Homo sapiens (Human).